The following is a 388-amino-acid chain: Mannitol-1-phosphate 5-dehydrogenase (388 aa).

Residue 5–16 (AIQFGGGNIGRG) coordinates NAD(+). Lysine 213 is a catalytic residue.

Belongs to the mannitol dehydrogenase family. As to quaternary structure, monomer.

The enzyme catalyses D-mannitol 1-phosphate + NAD(+) = beta-D-fructose 6-phosphate + NADH + H(+). Its function is as follows. Catalyzes the NAD(H)-dependent interconversion of D-fructose 6-phosphate and D-mannitol 1-phosphate in the mannitol metabolic pathway. In Aspergillus terreus (strain NIH 2624 / FGSC A1156), this protein is Mannitol-1-phosphate 5-dehydrogenase (mpdA).